The following is a 287-amino-acid chain: Probable endoribonuclease YicC (287 aa).

The protein belongs to the YicC/YloC family. It depends on a divalent metal cation as a cofactor.

In terms of biological role, probably a ssRNA endonuclease. Functionally, might contribute to small RNA (sRNA) regulation. This is Probable endoribonuclease YicC from Salmonella typhimurium (strain LT2 / SGSC1412 / ATCC 700720).